The chain runs to 329 residues: Gibberellin 2-beta-dioxygenase 1 (329 aa).

Positions 165 to 273 (NTDSILRLNH…RVSMIYFAGP (109 aa)) constitute a Fe2OG dioxygenase domain. Fe cation-binding residues include histidine 197, aspartate 199, and histidine 254. Residue arginine 264 is part of the active site. Arginine 264 contributes to the 2-oxoglutarate binding site.

This sequence belongs to the iron/ascorbate-dependent oxidoreductase family. GA2OX subfamily. It depends on Fe(2+) as a cofactor. In terms of tissue distribution, preferentially expressed in flowers, siliques, and upper stems. Not expressed in the apex.

The enzyme catalyses gibberellin A1 + 2-oxoglutarate + O2 = gibberellin A8 + succinate + CO2. The protein operates within plant hormone biosynthesis; gibberellin biosynthesis. Functionally, catalyzes the 2-beta-hydroxylation of several biologically active gibberellins, leading to the homeostatic regulation of their endogenous level. Catabolism of gibberellins (GAs) plays a central role in plant development. Converts GA9/GA20 to GA51/GA29 and GA4/GA1 to GA34/GA8. In Arabidopsis thaliana (Mouse-ear cress), this protein is Gibberellin 2-beta-dioxygenase 1 (GA2OX1).